Here is an 831-residue protein sequence, read N- to C-terminus: Sodium/hydrogen exchanger 3 (831 aa).

Positions 1–28 (MWHPALGPGWKPLLALALALTSLRGVRG) are cleaved as a signal peptide. Topologically, residues 29 to 48 (IEEEPNSGGSFQIVTFKWHH) are extracellular. The helical transmembrane segment at 49–71 (VQDPYIIALWILVASLAKIVFHL) threads the bilayer. Over 72–79 (SHKVTSVV) the chain is Cytoplasmic. The helical transmembrane segment at 80–99 (PESALLIVLGLVLGGIVWAA) threads the bilayer. The Extracellular portion of the chain corresponds to 100–108 (DHIASFTLT). Residues 109–126 (PTLFFFYLLPPIVLDAGY) form a helical membrane-spanning segment. Residues 127–129 (FMP) lie on the Cytoplasmic side of the membrane. The chain crosses the membrane as a helical span at residues 130–165 (NRLFFGNLGTILLYAVIGTIWNAATTGLSLYGVFLS). A 1,2-diacyl-sn-glycero-3-phospho-(1D-myo-inositol)-binding residues include glycine 135, glycine 138, and threonine 139. Residues 166–178 (GLMGELKIGLLDF) lie on the Extracellular side of the membrane. Residues 179–200 (LLFGSLIAAVDPVAVLAVFEEV) form a helical membrane-spanning segment. At 201–202 (HV) the chain is on the cytoplasmic side. Residues 203–234 (NEVLFIIVFGESLLNDAVTVVLYNVFESFVTL) traverse the membrane as a helical segment. Residues 235–241 (GGDAVTG) lie on the Extracellular side of the membrane. Residues 242 to 276 (VDCVKGIVSFFVVSLGGTLVGVIFAFLLSLVTRFT) traverse the membrane as a helical segment. Over 277–278 (KH) the chain is Cytoplasmic. A helical transmembrane segment spans residues 279 to 301 (VRIIEPGFVFVISYLSYLTSEML). The Extracellular portion of the chain corresponds to 302 to 303 (SL). A helical transmembrane segment spans residues 304–320 (SAILAITFCGICCQKYV). The Cytoplasmic segment spans residues 321 to 327 (KANISEQ). A helical membrane pass occupies residues 328–356 (SATTVRYTMKMLASGAETIIFMFLGISAV). The Extracellular segment spans residues 357–364 (DPVIWTWN). The chain crosses the membrane as a helical span at residues 365–386 (TAFVLLTLVFISVYRAIGVVLQ). The Cytoplasmic segment spans residues 387-399 (TWILNRYRMVQLE). Residue methionine 395 coordinates a 1,2-diacyl-sn-glycero-3-phospho-(1D-myo-inositol). Residues 400–423 (TIDQVVMSYGGLRGAVAYALVVLL) traverse the membrane as a helical segment. Residues 424–430 (DEKKVKE) are Extracellular-facing. A helical membrane pass occupies residues 431 to 464 (KNLFVSTTLIVVFFTVIFQGLTIKPLVQWLKVKR). At 465-831 (SEQREPKLNE…QPASPESTHM (367 aa)) the chain is on the cytoplasmic side. The a 1,2-diacyl-sn-glycero-3-phospho-(1D-myo-inositol) site is built by glutamine 494, isoleucine 495, and histidine 497. Serine 552 and serine 560 each carry phosphoserine. The segment at 573-587 (RPSTVEASVSYFLRE) is interaction with EZR. Positions 588-665 (NVSAVCLDMQ…RKRLESFKSA (78 aa)) are interaction with NHERF4. The interaction with AHCYL1 stretch occupies residues 589-693 (VSAVCLDMQS…AQKRRNSSIP (105 aa)). A phosphoserine mark is found at serine 590 and serine 605. Position 661 is a phosphoserine; by SGK1 (serine 661). A phosphoserine mark is found at serine 716, serine 807, and serine 810. Residues 808 to 831 (VDSFLQADGPEEQLQPASPESTHM) are disordered. The span at 822 to 831 (QPASPESTHM) shows a compositional bias: polar residues.

Belongs to the monovalent cation:p,roton antiporter 1 (CPA1) transporter (TC 2.A.36) family. Homodimer. Found in the forms of complex and dynamic macromolecular complexes. Binds NHERF1 and NHERF2. Interacts with NHERF4 and interactions decrease in response to elevated calcium ion levels. Interacts with PDZK1 (via C-terminal PDZ domain). Interacts with CHP1; this interaction increases trafficking and activity at the plasma membrane of SLC9A3. Interacts with CHP2 and SHANK2. Interacts with AHCYL1; the interaction is required for SLC9A3 activity. Interacts with EZR; interaction targets SLC9A3 to the apical membrane. Interacts with SNX27 (via PDZ domains); directs SLC9A3 membrane insertion from early endosomes to the plasma membrane. Post-translationally, phosphorylated by PRKACA at Ser-552 and Ser-605, which inhibits activity. Phosphorylation of Ser-605 is essential for cAMP-mediated inhibition of SLC9A3. Phosphorylation at Ser-661 by SGK1 is associated with increased abundance at the cell membrane. Phosphorylation at Ser-716 by CSNK2A1 regulates SLC9A3 activity through the formation of multiple signaling complexes. Most abundant in colon and small intestine, followed by kidney and stomach. In kidney, expressed in proximal tubules and outer medulla (at protein level).

Its subcellular location is the apical cell membrane. It localises to the cell membrane. The protein localises to the recycling endosome membrane. It is found in the early endosome membrane. It carries out the reaction Na(+)(in) + H(+)(out) = Na(+)(out) + H(+)(in). Seems to switch between active and inactive modes in response to various stimuli. Activated directly or indirectly by membrane phosphatidylinositol (PIs). Regulated by a variety of auxiliary proteins, which facilitate the maturation, cell surface expression and function of the transporter. Inhibited specifically by the drug tenapanor. Plasma membrane Na(+)/H(+) antiporter. Exchanges intracellular H(+) ions for extracellular Na(+) in 1:1 stoichiometry, playing a key role in salt and fluid absorption and pH homeostasis. Major apical Na(+)/H(+) exchanger in kidney and intestine playing an important role in renal and intestine Na(+) absorption and blood pressure regulation. This Rattus norvegicus (Rat) protein is Sodium/hydrogen exchanger 3 (Slc9a3).